We begin with the raw amino-acid sequence, 346 residues long: Structure-specific endonuclease subunit SLX1 (346 aa).

Positions 10–92 constitute a GIY-YIG domain; the sequence is ALYCVYILRS…TNPHTSLHIP (83 aa). The SLX1-type zinc finger occupies 238 to 296; it reads CVVCKEEIDPEEGGLHAVCSNEGCEGVGHLRCWGRYLLKSEEGGGEGAILPVGGRCPRC. Over residues 324–336 the composition is skewed to basic residues; it reads KVKRKRAPRKKTA. The segment at 324–346 is disordered; the sequence is KVKRKRAPRKKTAKTKETREEDG. The span at 337–346 shows a compositional bias: basic and acidic residues; it reads KTKETREEDG.

This sequence belongs to the SLX1 family. As to quaternary structure, forms a heterodimer with SLX4. It depends on a divalent metal cation as a cofactor.

It localises to the nucleus. In terms of biological role, catalytic subunit of the SLX1-SLX4 structure-specific endonuclease that resolves DNA secondary structures generated during DNA repair and recombination. Has endonuclease activity towards branched DNA substrates, introducing single-strand cuts in duplex DNA close to junctions with ss-DNA. This chain is Structure-specific endonuclease subunit SLX1, found in Podospora anserina (strain S / ATCC MYA-4624 / DSM 980 / FGSC 10383) (Pleurage anserina).